The following is a 322-amino-acid chain: uncharacterized protein (322 aa).

Positions 277-322 (LVTYGGKDGPSDNEDGPSDDEDGPSDDEEGLSKDGVSEYYQSDLDD) are disordered. The segment covering 287–305 (SDNEDGPSDDEDGPSDDEE) has biased composition (acidic residues).

This is an uncharacterized protein from Frog virus 3 (isolate Goorha) (FV-3).